Here is a 141-residue protein sequence, read N- to C-terminus: Large ribosomal subunit protein uL11 (141 aa).

The protein belongs to the universal ribosomal protein uL11 family. In terms of assembly, part of the ribosomal stalk of the 50S ribosomal subunit. Interacts with L10 and the large rRNA to form the base of the stalk. L10 forms an elongated spine to which L12 dimers bind in a sequential fashion forming a multimeric L10(L12)X complex. One or more lysine residues are methylated.

Functionally, forms part of the ribosomal stalk which helps the ribosome interact with GTP-bound translation factors. The sequence is that of Large ribosomal subunit protein uL11 from Gloeothece citriformis (strain PCC 7424) (Cyanothece sp. (strain PCC 7424)).